An 874-amino-acid polypeptide reads, in one-letter code: Alanine--tRNA ligase (874 aa).

The Zn(2+) site is built by His562, His566, Cys665, and His669.

Belongs to the class-II aminoacyl-tRNA synthetase family. It depends on Zn(2+) as a cofactor.

Its subcellular location is the cytoplasm. It carries out the reaction tRNA(Ala) + L-alanine + ATP = L-alanyl-tRNA(Ala) + AMP + diphosphate. In terms of biological role, catalyzes the attachment of alanine to tRNA(Ala) in a two-step reaction: alanine is first activated by ATP to form Ala-AMP and then transferred to the acceptor end of tRNA(Ala). Also edits incorrectly charged Ser-tRNA(Ala) and Gly-tRNA(Ala) via its editing domain. The polypeptide is Alanine--tRNA ligase (Pseudomonas fluorescens (strain Pf0-1)).